A 258-amino-acid chain; its full sequence is NAD-capped RNA hydrolase NudC (258 aa).

Residue arginine 69 participates in substrate binding. Cysteine 98 and cysteine 101 together coordinate Zn(2+). Glutamate 111 is a substrate binding site. Zn(2+) contacts are provided by cysteine 116 and cysteine 119. Position 124 (tyrosine 124) interacts with substrate. Residues 125 to 248 (PQIAPCIIVA…TVARRLIEDT (124 aa)) form the Nudix hydrolase domain. The a divalent metal cation site is built by alanine 158, glutamate 174, and glutamate 178. Residues 159–180 (GFVEVGETLEQTVAREVMEESG) carry the Nudix box motif. 192 to 199 (QPWPFPMS) lines the substrate pocket. Glutamate 219 provides a ligand contact to a divalent metal cation. Alanine 241 lines the substrate pocket.

Belongs to the Nudix hydrolase family. NudC subfamily. In terms of assembly, homodimer. Requires Mg(2+) as cofactor. The cofactor is Mn(2+). It depends on Zn(2+) as a cofactor.

It catalyses the reaction a 5'-end NAD(+)-phospho-ribonucleoside in mRNA + H2O = a 5'-end phospho-adenosine-phospho-ribonucleoside in mRNA + beta-nicotinamide D-ribonucleotide + 2 H(+). It carries out the reaction NAD(+) + H2O = beta-nicotinamide D-ribonucleotide + AMP + 2 H(+). The enzyme catalyses NADH + H2O = reduced beta-nicotinamide D-ribonucleotide + AMP + 2 H(+). Its function is as follows. mRNA decapping enzyme that specifically removes the nicotinamide adenine dinucleotide (NAD) cap from a subset of mRNAs by hydrolyzing the diphosphate linkage to produce nicotinamide mononucleotide (NMN) and 5' monophosphate mRNA. The NAD-cap is present at the 5'-end of some mRNAs and stabilizes RNA against 5'-processing. Has preference for mRNAs with a 5'-end purine. Catalyzes the hydrolysis of a broad range of dinucleotide pyrophosphates. In Enterobacter sp. (strain 638), this protein is NAD-capped RNA hydrolase NudC.